Consider the following 488-residue polypeptide: MGEPDPLVSGQLAARRSWCLRRLGMDCEWLQLEAGTEVTIGRGLSVTYQLISKVCPLMISRSHCVLKQNPEGQWTIMDNKSLNGVWLNRERLAPLQGYCIRKGDHIQLGVPLESRETAEYEYEVIEEDWESLAPCLAPKNDQRMEKHKGSRTKRKFSSPGLENLPAEGSSDLRCPLANVASKPIEPEKLHGKGDASSQSLGCLCPGLTSLKASERAAGPHACSALPKVLELSCPKKQKACRPSASQNSLELFKVTMSRMLKLKTQMQEKQIAVLNVKRQTRKGSSKKIVRMEKELRNLQSQLYAEQAQQQARVEQLEKTFQEEAHYLQGLEKEQGECDLKQQLVQALQEHQALMEELNCSKKDFEKIIQAKNKELEQTKEEKDKVQAQKEEVLSHMNDLLENELQCIICSEYFIEAVTLNCAHSFCSFCINEWMKRKVECPICRKDIESRTNSLVLDNCISKMVDNLSSDVKERRSVLIRERRAKRLS.

An FHA domain is found at 38–92 (VTIGRGLSVTYQLISKVCPLMISRSHCVLKQNPEGQWTIMDNKSLNGVWLNRERL). The interval 68-72 (QNPEG) is required for interaction with PIWIL1. The interval 141–164 (DQRMEKHKGSRTKRKFSSPGLENL) is disordered. Basic residues predominate over residues 145–156 (EKHKGSRTKRKF). Ser-157 bears the Phosphoserine mark. The segment at 406–444 (CIICSEYFIEAVTLNCAHSFCSFCINEWMKRKVECPICR) adopts an RING-type zinc-finger fold.

Belongs to the RNF8 family. As to quaternary structure, homodimer. Forms a E2-E3 ubiquitin ligase complex composed of the RNF8 homodimer and a E2 heterodimer of UBE2N and UBE2V2. Interacts with class III E2s, including UBE2E1, UBE2E2, and UBE2E3 and with UBE2N. Interacts with RXRA. Interacts (via FHA domain) with ATM-phosphorylated MDC1. Interacts (via FHA domain) with 'Thr-4829' phosphorylated HERC2 (via C-terminus). Interacts with PIWIL1; leading to sequester RNF8 in the cytoplasm. Interacts with WRAP53/TCAB1. In terms of assembly, (Microbial infection) May interact with the L.monocytogenes protein actA; however, given these errors in the sequence (AJ242721), the relevance of the interaction with actA remains to be confirmed. Post-translationally, autoubiquitinated through 'Lys-48' and 'Lys-63' of ubiquitin. 'Lys-63' polyubiquitination is mediated by UBE2N. 'Lys-29'-type polyubiquitination is also observed, but it doesn't require its own functional RING-type zinc finger.

The protein localises to the nucleus. Its subcellular location is the cytoplasm. It is found in the midbody. The protein resides in the chromosome. It localises to the telomere. The enzyme catalyses S-ubiquitinyl-[E2 ubiquitin-conjugating enzyme]-L-cysteine + [acceptor protein]-L-lysine = [E2 ubiquitin-conjugating enzyme]-L-cysteine + N(6)-ubiquitinyl-[acceptor protein]-L-lysine.. It functions in the pathway protein modification; protein ubiquitination. Functionally, E3 ubiquitin-protein ligase that plays a key role in DNA damage signaling via 2 distinct roles: by mediating the 'Lys-63'-linked ubiquitination of histones H2A and H2AX and promoting the recruitment of DNA repair proteins at double-strand breaks (DSBs) sites, and by catalyzing 'Lys-48'-linked ubiquitination to remove target proteins from DNA damage sites. Following DNA DSBs, it is recruited to the sites of damage by ATM-phosphorylated MDC1 and catalyzes the 'Lys-63'-linked ubiquitination of histones H2A and H2AX, thereby promoting the formation of TP53BP1 and BRCA1 ionizing radiation-induced foci (IRIF). Also controls the recruitment of UIMC1-BRCC3 (RAP80-BRCC36) and PAXIP1/PTIP to DNA damage sites. Promotes the recruitment of NBN to DNA damage sites by catalyzing 'Lys-6'-linked ubiquitination of NBN. Also recruited at DNA interstrand cross-links (ICLs) sites and catalyzes 'Lys-63'-linked ubiquitination of histones H2A and H2AX, leading to recruitment of FAAP20 and Fanconi anemia (FA) complex, followed by interstrand cross-link repair. H2A ubiquitination also mediates the ATM-dependent transcriptional silencing at regions flanking DSBs in cis, a mechanism to avoid collision between transcription and repair intermediates. Promotes the formation of 'Lys-63'-linked polyubiquitin chains via interactions with the specific ubiquitin-conjugating UBE2N/UBC13 and ubiquitinates non-histone substrates such as PCNA. Substrates that are polyubiquitinated at 'Lys-63' are usually not targeted for degradation. Also catalyzes the formation of 'Lys-48'-linked polyubiquitin chains via interaction with the ubiquitin-conjugating UBE2L6/UBCH8, leading to degradation of substrate proteins such as CHEK2, JMJD2A/KDM4A and KU80/XRCC5: it is still unclear how the preference toward 'Lys-48'- versus 'Lys-63'-linked ubiquitination is regulated but it could be due to RNF8 ability to interact with specific E2 specific ligases. For instance, interaction with phosphorylated HERC2 promotes the association between RNF8 and UBE2N/UBC13 and favors the specific formation of 'Lys-63'-linked ubiquitin chains. Promotes non-homologous end joining (NHEJ) by promoting the 'Lys-48'-linked ubiquitination and degradation the of KU80/XRCC5. Following DNA damage, mediates the ubiquitination and degradation of JMJD2A/KDM4A in collaboration with RNF168, leading to unmask H4K20me2 mark and promote the recruitment of TP53BP1 at DNA damage sites. Following DNA damage, mediates the ubiquitination and degradation of POLD4/p12, a subunit of DNA polymerase delta. In the absence of POLD4, DNA polymerase delta complex exhibits higher proofreading activity. In addition to its function in damage signaling, also plays a role in higher-order chromatin structure by mediating extensive chromatin decondensation. Involved in the activation of ATM by promoting histone H2B ubiquitination, which indirectly triggers histone H4 'Lys-16' acetylation (H4K16ac), establishing a chromatin environment that promotes efficient activation of ATM kinase. Required in the testis, where it plays a role in the replacement of histones during spermatogenesis. At uncapped telomeres, promotes the joining of deprotected chromosome ends by inducing H2A ubiquitination and TP53BP1 recruitment, suggesting that it may enhance cancer development by aggravating telomere-induced genome instability in case of telomeric crisis. Promotes the assembly of RAD51 at DNA DSBs in the absence of BRCA1 and TP53BP1 Also involved in class switch recombination in immune system, via its role in regulation of DSBs repair. May be required for proper exit from mitosis after spindle checkpoint activation and may regulate cytokinesis. May play a role in the regulation of RXRA-mediated transcriptional activity. Not involved in RXRA ubiquitination by UBE2E2. This is E3 ubiquitin-protein ligase RNF8 from Mus musculus (Mouse).